The following is a 176-amino-acid chain: Translation initiation factor IF-3 (176 aa).

This sequence belongs to the IF-3 family. As to quaternary structure, monomer.

Its subcellular location is the cytoplasm. Functionally, IF-3 binds to the 30S ribosomal subunit and shifts the equilibrium between 70S ribosomes and their 50S and 30S subunits in favor of the free subunits, thus enhancing the availability of 30S subunits on which protein synthesis initiation begins. In Rippkaea orientalis (strain PCC 8801 / RF-1) (Cyanothece sp. (strain PCC 8801)), this protein is Translation initiation factor IF-3.